Consider the following 433-residue polypeptide: Serine--tRNA ligase (433 aa).

L-serine is bound at residue 235 to 237 (TSE). 266–268 (RSE) lines the ATP pocket. An L-serine-binding site is contributed by Glu289. 353 to 356 (EISS) serves as a coordination point for ATP. Ser388 serves as a coordination point for L-serine.

It belongs to the class-II aminoacyl-tRNA synthetase family. Type-1 seryl-tRNA synthetase subfamily. As to quaternary structure, homodimer. The tRNA molecule binds across the dimer.

It localises to the cytoplasm. The catalysed reaction is tRNA(Ser) + L-serine + ATP = L-seryl-tRNA(Ser) + AMP + diphosphate + H(+). It carries out the reaction tRNA(Sec) + L-serine + ATP = L-seryl-tRNA(Sec) + AMP + diphosphate + H(+). The protein operates within aminoacyl-tRNA biosynthesis; selenocysteinyl-tRNA(Sec) biosynthesis; L-seryl-tRNA(Sec) from L-serine and tRNA(Sec): step 1/1. Catalyzes the attachment of serine to tRNA(Ser). Is also able to aminoacylate tRNA(Sec) with serine, to form the misacylated tRNA L-seryl-tRNA(Sec), which will be further converted into selenocysteinyl-tRNA(Sec). This Burkholderia pseudomallei (strain 1106a) protein is Serine--tRNA ligase.